The sequence spans 225 residues: Cytochrome c oxidase subunit 2 (225 aa).

The Mitochondrial intermembrane portion of the chain corresponds to 1–25; the sequence is MSTWFMFMFQESNSYYADNLISFHN. A helical transmembrane segment spans residues 26 to 47; the sequence is MVMMIIIMISTLTVYIILDLFM. Residues 48–62 lie on the Mitochondrial matrix side of the membrane; it reads NKFSNLFLLKNHNIE. Residues 63–82 form a helical membrane-spanning segment; the sequence is IIWTIIPIIILLIICFPSLK. At 83 to 225 the chain is on the mitochondrial intermembrane side; it reads ILYLIDEIVN…YFLNWVNKQI (143 aa). The Cu cation site is built by His159, Cys194, Glu196, Cys198, His202, and Met205. Residue Glu196 participates in Mg(2+) binding.

The protein belongs to the cytochrome c oxidase subunit 2 family. As to quaternary structure, component of the cytochrome c oxidase (complex IV, CIV), a multisubunit enzyme composed of a catalytic core of 3 subunits and several supernumerary subunits. The complex exists as a monomer or a dimer and forms supercomplexes (SCs) in the inner mitochondrial membrane with ubiquinol-cytochrome c oxidoreductase (cytochrome b-c1 complex, complex III, CIII). The cofactor is Cu cation.

The protein localises to the mitochondrion inner membrane. It catalyses the reaction 4 Fe(II)-[cytochrome c] + O2 + 8 H(+)(in) = 4 Fe(III)-[cytochrome c] + 2 H2O + 4 H(+)(out). Functionally, component of the cytochrome c oxidase, the last enzyme in the mitochondrial electron transport chain which drives oxidative phosphorylation. The respiratory chain contains 3 multisubunit complexes succinate dehydrogenase (complex II, CII), ubiquinol-cytochrome c oxidoreductase (cytochrome b-c1 complex, complex III, CIII) and cytochrome c oxidase (complex IV, CIV), that cooperate to transfer electrons derived from NADH and succinate to molecular oxygen, creating an electrochemical gradient over the inner membrane that drives transmembrane transport and the ATP synthase. Cytochrome c oxidase is the component of the respiratory chain that catalyzes the reduction of oxygen to water. Electrons originating from reduced cytochrome c in the intermembrane space (IMS) are transferred via the dinuclear copper A center (CU(A)) of subunit 2 and heme A of subunit 1 to the active site in subunit 1, a binuclear center (BNC) formed by heme A3 and copper B (CU(B)). The BNC reduces molecular oxygen to 2 water molecules using 4 electrons from cytochrome c in the IMS and 4 protons from the mitochondrial matrix. This Apis mellifera ligustica (Common honeybee) protein is Cytochrome c oxidase subunit 2 (COII).